Consider the following 381-residue polypeptide: 2-methylcitrate synthase 1 (381 aa).

His-192 contributes to the substrate binding site. The active site involves His-227. Position 260–264 (Arg-260–Phe-264) interacts with CoA. His-266 is a catalytic residue. Arg-275 contacts substrate. Residue Asp-317 is part of the active site. Substrate-binding residues include Arg-342 and Arg-361.

This sequence belongs to the citrate synthase family. In terms of assembly, homodimer.

The catalysed reaction is propanoyl-CoA + oxaloacetate + H2O = (2S,3S)-2-methylcitrate + CoA + H(+). It carries out the reaction oxaloacetate + acetyl-CoA + H2O = citrate + CoA + H(+). Its pathway is carbohydrate metabolism; tricarboxylic acid cycle. In terms of biological role, catalyzes the Claisen condensation of propionyl-CoA and oxaloacetate (OAA) to yield 2-methylcitrate (2-MC) and CoA. Also catalyzes the condensation of oxaloacetate with propionyl-CoA but with a lower specificity. The chain is 2-methylcitrate synthase 1 (prpC1) from Corynebacterium glutamicum (strain ATCC 13032 / DSM 20300 / JCM 1318 / BCRC 11384 / CCUG 27702 / LMG 3730 / NBRC 12168 / NCIMB 10025 / NRRL B-2784 / 534).